The primary structure comprises 308 residues: RNA pseudouridylate synthase domain-containing protein 1 (308 aa).

Residue Met-1 is modified to N-acetylmethionine. Residue Asp-67 is part of the active site. Residues Ala-257–Arg-292 are disordered. The segment covering Pro-269–Glu-287 has biased composition (pro residues).

It belongs to the pseudouridine synthase RluA family.

This is RNA pseudouridylate synthase domain-containing protein 1 (RPUSD1) from Bos taurus (Bovine).